The chain runs to 1249 residues: Minor capsid protein M1249L (1249 aa).

Belongs to the asfivirus M1249L family. Interacts with the minor capsid protein p17 and with the hexon capsid protein p72 capsomers; these interactions form a rigid zipper structure that stabilizes the capsomers. Interacts with host IRF3.

The protein resides in the virion. Its subcellular location is the host cytoplasm. Functionally, together with the penton and the other minor capsid proteins (p17, p49), forms a complicated network immediately below the outer capsid shell, stabilizing the whole capsid. In addition, blocks IFN-beta transactivation mediated by the cGAS-STING pathway and regulates the transcriptional activity of IFN-beta. Mechanistically, suppresses the phosphorylation of host key adapter protein TBK1 and degrades host IRF3 in the cytoplasm. This African swine fever virus (isolate Tick/Malawi/Lil 20-1/1983) (ASFV) protein is Minor capsid protein M1249L.